Here is a 1022-residue protein sequence, read N- to C-terminus: Translation initiation factor IF-2 (1022 aa).

The segment covering 82 to 94 (EQSRKTLEKEQHL) has biased composition (basic and acidic residues). Disordered stretches follow at residues 82–129 (EQSR…AVPA) and 342–436 (SENK…QREL). Low complexity predominate over residues 104 to 115 (ASKSSAKGSESA). Residues 375–384 (KAKKGKKKKK) are compositionally biased toward basic residues. Residues 421–436 (SEREREQEEGAAQREL) show a composition bias toward basic and acidic residues. Residues 519 to 689 (TRPPVVTIMG…LTEAELRELK (171 aa)) form the tr-type G domain. Positions 528–535 (GHVDHGKT) are G1. 528–535 (GHVDHGKT) is a GTP binding site. A G2 region spans residues 553 to 557 (GITQH). Residues 575–578 (DTPG) form a G3 region. GTP-binding positions include 575–579 (DTPGH) and 629–632 (NKID). A G4 region spans residues 629–632 (NKID). The G5 stretch occupies residues 665 to 667 (SAK).

The protein belongs to the TRAFAC class translation factor GTPase superfamily. Classic translation factor GTPase family. IF-2 subfamily.

The protein resides in the cytoplasm. Functionally, one of the essential components for the initiation of protein synthesis. Protects formylmethionyl-tRNA from spontaneous hydrolysis and promotes its binding to the 30S ribosomal subunits. Also involved in the hydrolysis of GTP during the formation of the 70S ribosomal complex. The chain is Translation initiation factor IF-2 from Chlorobium chlorochromatii (strain CaD3).